Reading from the N-terminus, the 447-residue chain is BAG family molecular chaperone regulator 5 (447 aa).

BAG domains follow at residues 9 to 86 (SISR…EQNA), 95 to 167 (QNIF…ENCM), 182 to 260 (SVAK…DLEE), 275 to 350 (SILK…DLKE), and 365 to 442 (SHKA…DLKS).

As to quaternary structure, binds to the ATPase domain of HSP/HSP70 chaperones. Binds PRKN. Interacts complex with HSPA8 and JPH2.

In terms of biological role, co-chaperone for HSP/HSP70 proteins. It functions as a nucleotide-exchange factor promoting the release of ADP from HSP70, thereby activating Hsp70-mediated protein refolding. Has an essential role in maintaining proteostasis at junctional membrane complexes (JMC), where it may function as a scaffold between the HSPA8 chaperone and JMC proteins enabling correct, HSPA8-dependent JMC protein folding. Inhibits both auto-ubiquitination of PRKN and ubiquitination of target proteins by PRKN. This chain is BAG family molecular chaperone regulator 5 (BAG5), found in Bos taurus (Bovine).